The chain runs to 117 residues: Pterin-4-alpha-carbinolamine dehydratase 2 (117 aa).

Residues Lys101, Lys105, and Lys112 each carry the N6-acetyllysine; alternate modification. Residues Lys101, Lys105, and Lys112 each carry the N6-succinyllysine; alternate modification.

This sequence belongs to the pterin-4-alpha-carbinolamine dehydratase family. Homotetramer. Interacts with DYRK1B.

It carries out the reaction (4aS,6R)-4a-hydroxy-L-erythro-5,6,7,8-tetrahydrobiopterin = (6R)-L-erythro-6,7-dihydrobiopterin + H2O. Functionally, involved in tetrahydrobiopterin biosynthesis. Seems to both prevent the formation of 7-pterins and accelerate the formation of quinonoid-BH2. Regulates the dimerization of homeodomain protein HNF-1-alpha and enhances its transcriptional activity. The polypeptide is Pterin-4-alpha-carbinolamine dehydratase 2 (PCBD2) (Pongo abelii (Sumatran orangutan)).